We begin with the raw amino-acid sequence, 269 residues long: Regulatory protein RecX (269 aa).

It belongs to the RecX family.

The protein localises to the cytoplasm. In terms of biological role, modulates RecA activity. This Geobacillus thermodenitrificans (strain NG80-2) protein is Regulatory protein RecX.